Reading from the N-terminus, the 481-residue chain is Extracellular exo-alpha-(1-&gt;5)-L-arabinofuranosidase (481 aa).

The signal sequence occupies residues M1–A27. The interval F37–P336 is catalytic. The Proton acceptor role is filled by D47. N186 is a substrate binding site. Catalysis depends on E223, which acts as the Proton donor. Residues H287, R321, H363 to F366, D379, H457 to N460, and D475 each bind substrate. The segment at V349–Y479 is ABD.

The protein belongs to the glycosyl hydrolase 43 family.

The protein localises to the secreted. It carries out the reaction Hydrolysis of terminal non-reducing alpha-L-arabinofuranoside residues in alpha-L-arabinosides.. It functions in the pathway glycan metabolism; L-arabinan degradation. Functionally, involved in the degradation of arabinan and is a key enzyme in the complete degradation of the plant cell wall. Catalyzes only the cleavage of terminal alpha-(1-&gt;5) arabinofuranosyl bonds of arabinan present in the arabinofuranosyl polysaccharides or oligosaccharides. It cannot act on other arabinose-containing polysaccharides and arabinoxylo-oligosaccharides. This chain is Extracellular exo-alpha-(1-&gt;5)-L-arabinofuranosidase, found in Streptomyces avermitilis (strain ATCC 31267 / DSM 46492 / JCM 5070 / NBRC 14893 / NCIMB 12804 / NRRL 8165 / MA-4680).